Reading from the N-terminus, the 73-residue chain is Translation initiation factor IF-1 (73 aa).

Positions 1–72 (MAKEDVIEVE…TKGRITYRFI (72 aa)) constitute an S1-like domain.

Belongs to the IF-1 family. In terms of assembly, component of the 30S ribosomal translation pre-initiation complex which assembles on the 30S ribosome in the order IF-2 and IF-3, IF-1 and N-formylmethionyl-tRNA(fMet); mRNA recruitment can occur at any time during PIC assembly.

The protein resides in the cytoplasm. Functionally, one of the essential components for the initiation of protein synthesis. Stabilizes the binding of IF-2 and IF-3 on the 30S subunit to which N-formylmethionyl-tRNA(fMet) subsequently binds. Helps modulate mRNA selection, yielding the 30S pre-initiation complex (PIC). Upon addition of the 50S ribosomal subunit IF-1, IF-2 and IF-3 are released leaving the mature 70S translation initiation complex. This is Translation initiation factor IF-1 from Lactobacillus johnsonii (strain CNCM I-12250 / La1 / NCC 533).